Reading from the N-terminus, the 384-residue chain is GTPase Obg (384 aa).

Residues M1–L159 form the Obg domain. The disordered stretch occupies residues A20 to W46. A compositionally biased stretch (gly residues) spans G33 to G43. Residues A160–T348 form the OBG-type G domain. GTP-binding positions include G166–S173, F191–H195, D213–G216, N284–D287, and S329–L331. Positions 173 and 193 each coordinate Mg(2+).

This sequence belongs to the TRAFAC class OBG-HflX-like GTPase superfamily. OBG GTPase family. In terms of assembly, monomer. Requires Mg(2+) as cofactor.

It localises to the cytoplasm. An essential GTPase which binds GTP, GDP and possibly (p)ppGpp with moderate affinity, with high nucleotide exchange rates and a fairly low GTP hydrolysis rate. Plays a role in control of the cell cycle, stress response, ribosome biogenesis and in those bacteria that undergo differentiation, in morphogenesis control. The polypeptide is GTPase Obg (Neisseria meningitidis serogroup B (strain ATCC BAA-335 / MC58)).